Here is a 100-residue protein sequence, read N- to C-terminus: Integration host factor subunit alpha (100 aa).

It belongs to the bacterial histone-like protein family. As to quaternary structure, heterodimer of an alpha and a beta chain.

In terms of biological role, this protein is one of the two subunits of integration host factor, a specific DNA-binding protein that functions in genetic recombination as well as in transcriptional and translational control. The polypeptide is Integration host factor subunit alpha (Cereibacter sphaeroides (strain ATCC 17023 / DSM 158 / JCM 6121 / CCUG 31486 / LMG 2827 / NBRC 12203 / NCIMB 8253 / ATH 2.4.1.) (Rhodobacter sphaeroides)).